Reading from the N-terminus, the 2512-residue chain is Isonitrile lipopeptide synthase (2512 aa).

2 Carrier domains span residues 935–1003 (AAGL…PTPD) and 1984–2059 (APAG…GRDA). O-(pantetheine 4'-phosphoryl)serine is present on residues S963 and S2019. The region spanning 2112-2372 (LTGATGFLGR…LPVTFVAEAI (261 aa)) is the Thioester reductase (TE) domain.

The protein belongs to the ATP-dependent AMP-binding enzyme family. The cofactor is pantetheine 4'-phosphate.

It carries out the reaction 2 a (3R)-3-isocyanyl-fatty acyl-[ACP] + L-lysine + ATP + 2 NADPH = an isonitrile lipopeptide + 2 holo-[ACP] + AMP + diphosphate + 2 NADP(+). In terms of biological role, nonribosomal peptide synthetase (NRPS) involved in the biosynthesis of a unique class of isonitrile lipopeptides (INLPs) that seem to function as virulence factors in M.tuberculosis and to play a role in metal acquisition. Catalyzes the final step in the pathway, i.e. the condensation of a (3R)-3-isocyanyl-fatty acyl-[ACP] to both amino groups of a lysine, producing isonitrile lipopeptides. The protein is Isonitrile lipopeptide synthase of Mycobacterium tuberculosis (strain ATCC 25618 / H37Rv).